The primary structure comprises 438 residues: 23S rRNA (uracil(1939)-C(5))-methyltransferase RlmD (438 aa).

The region spanning 9–68 (RRTVNRHIITVTADNLDAQGQGVARHQGKTIFVAGLLPGEQAQVQLTEEKRQFAKAKLVK) is the TRAM domain. [4Fe-4S] cluster is bound by residues Cys-81, Cys-87, Cys-90, and Cys-168. Positions 272, 301, 306, 322, 349, and 370 each coordinate S-adenosyl-L-methionine. The Nucleophile role is filled by Cys-396.

Belongs to the class I-like SAM-binding methyltransferase superfamily. RNA M5U methyltransferase family. RlmD subfamily.

It catalyses the reaction uridine(1939) in 23S rRNA + S-adenosyl-L-methionine = 5-methyluridine(1939) in 23S rRNA + S-adenosyl-L-homocysteine + H(+). Its function is as follows. Catalyzes the formation of 5-methyl-uridine at position 1939 (m5U1939) in 23S rRNA. This chain is 23S rRNA (uracil(1939)-C(5))-methyltransferase RlmD, found in Photorhabdus laumondii subsp. laumondii (strain DSM 15139 / CIP 105565 / TT01) (Photorhabdus luminescens subsp. laumondii).